The chain runs to 724 residues: DNA ligase (724 aa).

NAD(+) is bound by residues 44–48, 93–94, and glutamate 127; these read DADYD and SL. Lysine 129 (N6-AMP-lysine intermediate) is an active-site residue. Residues arginine 150, glutamate 186, lysine 307, and lysine 331 each coordinate NAD(+). The Zn(2+) site is built by cysteine 437, cysteine 440, cysteine 461, and cysteine 467. In terms of domain architecture, BRCT spans 646–724; sequence TEGSPVAGKT…EDEWLALIGG (79 aa).

Belongs to the NAD-dependent DNA ligase family. LigA subfamily. It depends on Mg(2+) as a cofactor. Requires Mn(2+) as cofactor.

It carries out the reaction NAD(+) + (deoxyribonucleotide)n-3'-hydroxyl + 5'-phospho-(deoxyribonucleotide)m = (deoxyribonucleotide)n+m + AMP + beta-nicotinamide D-nucleotide.. DNA ligase that catalyzes the formation of phosphodiester linkages between 5'-phosphoryl and 3'-hydroxyl groups in double-stranded DNA using NAD as a coenzyme and as the energy source for the reaction. It is essential for DNA replication and repair of damaged DNA. In Agrobacterium fabrum (strain C58 / ATCC 33970) (Agrobacterium tumefaciens (strain C58)), this protein is DNA ligase.